We begin with the raw amino-acid sequence, 152 residues long: Superoxide dismutase [Cu-Zn] 1 (152 aa).

Residues His45, His47, and His62 each coordinate Cu cation. Cys56 and Cys145 are oxidised to a cystine. 4 residues coordinate Zn(2+): His62, His70, His79, and Asp82. A Cu cation-binding site is contributed by His119.

This sequence belongs to the Cu-Zn superoxide dismutase family. As to quaternary structure, homodimer. Interacts with DJ1A and CCS. Requires Cu cation as cofactor. Zn(2+) is required as a cofactor. Expressed in leaves (at protein level). The spatial localization is regulated by miR398-mediated silencing. Mostly present in flowers, old rosette leaves and inflorescence, and, to a lower extent, in cauline leaves, stems and roots.

The protein resides in the cytoplasm. The protein localises to the cytosol. It localises to the nucleus. The catalysed reaction is 2 superoxide + 2 H(+) = H2O2 + O2. Functionally, destroys radicals which are normally produced within the cells and which are toxic to biological systems. In Arabidopsis thaliana (Mouse-ear cress), this protein is Superoxide dismutase [Cu-Zn] 1 (CSD1).